The sequence spans 114 residues: UPF0145 protein TT_C1581 (114 aa).

It belongs to the UPF0145 family.

The polypeptide is UPF0145 protein TT_C1581 (Thermus thermophilus (strain ATCC BAA-163 / DSM 7039 / HB27)).